A 328-amino-acid polypeptide reads, in one-letter code: 4-hydroxythreonine-4-phosphate dehydrogenase (328 aa).

The substrate site is built by H135 and T136. The a divalent metal cation site is built by H165, H210, and H265. Residues K273, N282, and R291 each coordinate substrate.

The protein belongs to the PdxA family. Homodimer. The cofactor is Zn(2+). Requires Mg(2+) as cofactor. Co(2+) serves as cofactor.

The protein localises to the cytoplasm. It carries out the reaction 4-(phosphooxy)-L-threonine + NAD(+) = 3-amino-2-oxopropyl phosphate + CO2 + NADH. It participates in cofactor biosynthesis; pyridoxine 5'-phosphate biosynthesis; pyridoxine 5'-phosphate from D-erythrose 4-phosphate: step 4/5. Functionally, catalyzes the NAD(P)-dependent oxidation of 4-(phosphooxy)-L-threonine (HTP) into 2-amino-3-oxo-4-(phosphooxy)butyric acid which spontaneously decarboxylates to form 3-amino-2-oxopropyl phosphate (AHAP). This is 4-hydroxythreonine-4-phosphate dehydrogenase from Enterobacter sp. (strain 638).